Reading from the N-terminus, the 123-residue chain is Small ribosomal subunit protein uS12 (123 aa).

At D89 the chain carries 3-methylthioaspartic acid.

Belongs to the universal ribosomal protein uS12 family. As to quaternary structure, part of the 30S ribosomal subunit. Contacts proteins S8 and S17. May interact with IF1 in the 30S initiation complex.

Functionally, with S4 and S5 plays an important role in translational accuracy. In terms of biological role, interacts with and stabilizes bases of the 16S rRNA that are involved in tRNA selection in the A site and with the mRNA backbone. Located at the interface of the 30S and 50S subunits, it traverses the body of the 30S subunit contacting proteins on the other side and probably holding the rRNA structure together. The combined cluster of proteins S8, S12 and S17 appears to hold together the shoulder and platform of the 30S subunit. The sequence is that of Small ribosomal subunit protein uS12 from Caulobacter sp. (strain K31).